Reading from the N-terminus, the 335-residue chain is UPF0353 protein Mflv_3659 (335 aa).

2 helical membrane-spanning segments follow: residues 18-38 and 67-87; these read WFFLFFFVVIGLVALYIVVQL and LPAVLMILSLVSFTIAMAGPT. In terms of domain architecture, VWFA spans 98 to 294; it reads VVMLVIDVSQ…EQLKQVFTNL (197 aa). The helical transmembrane segment at 309–329 threads the bilayer; that stretch reads VGWLRLGAGVLALAALGALLI.

It belongs to the UPF0353 family.

It is found in the cell membrane. The protein is UPF0353 protein Mflv_3659 of Mycolicibacterium gilvum (strain PYR-GCK) (Mycobacterium gilvum (strain PYR-GCK)).